The sequence spans 1111 residues: Phytochrome C (1111 aa).

The GAF domain occupies 213 to 393 (NMLLLCDALV…VFGVQINKEA (181 aa)). A phytochromobilin-binding site is contributed by Cys318. 2 PAS domains span residues 604-674 (IVNE…LEGS) and 737-808 (DYAR…TKLR). Residues 889–1111 (YLRHEVKDPE…FVILTEFPLI (223 aa)) enclose the Histidine kinase domain.

Belongs to the phytochrome family. In terms of assembly, homodimer. Contains one covalently linked phytochromobilin chromophore.

Regulatory photoreceptor which exists in two forms that are reversibly interconvertible by light: the Pr form that absorbs maximally in the red region of the spectrum and the Pfr form that absorbs maximally in the far-red region. Photoconversion of Pr to Pfr induces an array of morphogenic responses, whereas reconversion of Pfr to Pr cancels the induction of those responses. Pfr controls the expression of a number of nuclear genes including those encoding the small subunit of ribulose-bisphosphate carboxylase, chlorophyll A/B binding protein, protochlorophyllide reductase, rRNA, etc. It also controls the expression of its own gene(s) in a negative feedback fashion. The polypeptide is Phytochrome C (PHYC) (Arabidopsis thaliana (Mouse-ear cress)).